A 308-amino-acid polypeptide reads, in one-letter code: MPTVMPDVANQTQAQTEGALDWVGMSNIEVPLMVAAAGVPERPVAAKVEAFVNLKNPKTKGIHMSRLYLLLDKMSTEGELSHDTLKQLLNDFIESHKDISDQAFIKFDFDYHLRRKSLISKKQGWKAYPVSLTGRYDAGQLKLELSVDVPYSSTCPCSAALARQLIQDAFSEKFAGQEQVDASIMHEWLGSTEGIVATPHSQRSVAEVKVALSDSVNDFPIVELIDAIEGALKTPVQAAVKREDEQEFARLNGQNLMFCEDASRRLQHQLNQMSNFRDFWLRVNHYESLHAHDAVSVTTKGVPGGYSA.

It belongs to the GTP cyclohydrolase IV family.

It catalyses the reaction GTP + H2O = 7,8-dihydroneopterin 3'-triphosphate + formate + H(+). It functions in the pathway cofactor biosynthesis; 7,8-dihydroneopterin triphosphate biosynthesis; 7,8-dihydroneopterin triphosphate from GTP: step 1/1. Functionally, converts GTP to 7,8-dihydroneopterin triphosphate. The chain is GTP cyclohydrolase FolE2 from Idiomarina loihiensis (strain ATCC BAA-735 / DSM 15497 / L2-TR).